The primary structure comprises 141 residues: Large ribosomal subunit protein uL16 (141 aa).

It belongs to the universal ribosomal protein uL16 family. Part of the 50S ribosomal subunit.

Functionally, binds 23S rRNA and is also seen to make contacts with the A and possibly P site tRNAs. This Rhodospirillum centenum (strain ATCC 51521 / SW) protein is Large ribosomal subunit protein uL16.